Consider the following 530-residue polypeptide: PC4 and SFRS1-interacting protein (530 aa).

One can recognise a PWWP domain in the interval 1–64 (MTRDFKPGDL…PKDIFPYSEN (64 aa)). Lys75 participates in a covalent cross-link: Glycyl lysine isopeptide (Lys-Gly) (interchain with G-Cter in SUMO2). The interval 88-349 (PKVKFSSQQA…VEKKRETSMD (262 aa)) is disordered. The span at 93–107 (SSQQASAKQSNASSD) shows a compositional bias: low complexity. Phosphoserine occurs at positions 102, 105, and 106. A compositionally biased stretch (basic and acidic residues) spans 113–135 (KETSVSKEDTDPEEKASNEDVTK). Residues Thr115 and Thr122 each carry the phosphothreonine modification. Position 129 is a phosphoserine (Ser129). Thr141 is modified (phosphothreonine). Basic residues predominate over residues 144–153 (AARRGRKRKA). The short motif at 146 to 156 (RRGRKRKAEKQ) is the Nuclear localization signal element. Residue Thr167 is modified to Phosphothreonine. Phosphoserine occurs at positions 177 and 206. Residues 213-261 (EEDKSKKKGQEEKQPKKQLKKDEEGQKEEEKPRKEPDKKEGKKEVESKR) show a composition bias toward basic and acidic residues. Residue Ser271 is modified to Phosphoserine. Thr272 is subject to Phosphothreonine. Ser273 and Ser275 each carry phosphoserine. Acidic residues predominate over residues 274–283 (DSEEEGDDQE). The segment covering 287-302 (KRKGGRNFQTAHRRNM) has biased composition (basic residues). Residues 305–349 (GQHEKEAADRKRKQEEQMETEQQNKDEGKKPEVKKVEKKRETSMD) show a composition bias toward basic and acidic residues. Coiled-coil stretches lie at residues 306 to 334 (QHEK…EGKK) and 371 to 395 (NRCI…KHTE). Positions 340 to 417 (VEKKRETSMD…VSQVIMEKST (78 aa)) are integrase-binding domain (IBD). Ser434 carries the post-translational modification Phosphoserine. Thr437 is subject to Phosphothreonine. At Ser443 the chain carries Phosphoserine. The span at 446–473 (EQRQHEEANKTKDQGKKGPNKKLEKEQT) shows a compositional bias: basic and acidic residues. Residues 446–530 (EQRQHEEANK…ISLKDSTLDN (85 aa)) are disordered. Over residues 474 to 494 (GSKTLNGGSDAQDSNQPQHNG) the composition is skewed to polar residues. The segment covering 498-530 (EESKDNHEASSKKKPSSEERETEISLKDSTLDN) has biased composition (basic and acidic residues). Position 514 is a phosphoserine (Ser514). At Arg517 the chain carries Citrulline. At Ser522 the chain carries Phosphoserine. Phosphothreonine is present on Thr527.

It belongs to the HDGF family. Monomer. Interacts with IFRD1/PC4. Interacts (via IBD domain) with POGZ (via IBM motif) and CDCA7L (via IBM motifs). Interacts (via IBD domain) with KMT2A (via IBM motifs) with a moderate affinity whereas interacts with the KMT2A-MEN1 complex with a greater affinity; MEN1 enhances interaction of KMT2A with PSIP1. Interacts (via IBD domain) with IWS1 (via IBM motif), MED1 (via IBM motif) and DBF4 (via IBM motifs). Citrullinated by PADI4.

The protein resides in the nucleus. In terms of biological role, transcriptional coactivator involved in neuroepithelial stem cell differentiation and neurogenesis. Involved in particular in lens epithelial cell gene regulation and stress responses. May play an important role in lens epithelial to fiber cell terminal differentiation. May play a protective role during stress-induced apoptosis. The protein is PC4 and SFRS1-interacting protein (PSIP1) of Bos taurus (Bovine).